The following is a 342-amino-acid chain: Polyprenyl transferase trt2 (342 aa).

9 helical membrane-spanning segments follow: residues 71 to 91, 95 to 115, 141 to 161, 163 to 183, 187 to 207, 216 to 236, 261 to 278, 282 to 304, and 319 to 339; these read VVGVAYTAAIAPVSLPATVLL, IILSLWGFLIRSGGCAWNDLI, AALLTAIIFGCGGLLLLLLPS, CTVEAGIILFFALLYPFGKRF, PQLILVNIAWAIPMAMSSLEV, TLSMCIFIASVIVMIDVVYAC, LAYGFFFSGAISLLLGGV, LGLPFIVFSVGGHIFGFLRFLSV, and AKSSCLLATVFWVLGFFLEYL.

This sequence belongs to the UbiA prenyltransferase family. Mg(2+) serves as cofactor.

The protein resides in the membrane. It carries out the reaction 3,5-dimethylorsellinate + (2E,6E)-farnesyl diphosphate = (3R)-3-farnesyl-6-hydroxy-2,3,5-trimethyl-4-oxocyclohexa-1,5-diene-1-carboxylate + diphosphate + H(+). It participates in secondary metabolite biosynthesis; terpenoid biosynthesis. Functionally, polyprenyl transferase; part of the gene cluster that mediates the biosynthesis of terretonin, a fungal meroterpenoid that acts as a mycotoxin. The first step of the pathway is the synthesis of 3,5-dimethylorsellinic acid (DMOA) by the polyketide synthase trt4. DMOA is then prenylated into farnesyl-DMOA by the polyprenyl transferase trt2. Methylation by the methyltransferase trt5 then leads to farnesyl-DMOA methyl ester which is further subject to epoxidation by the FAD-dependent monooxygenase trt8 to yield epoxyfarnesyl-DMOA methyl ester. Cyclization of epoxyfarnesyl-DMOA methyl ester by the terpene cyclase trt1 leads to a tetracycle intermediate which is in turn converted to preterretonin. Dehydrogenase trt9 comes next to transform preterretonin to preterrenoid. The FAD-dependent monooxygenase trt3 is then required for the C-hydroxylation at C16 of preterrenoid to yield terrenoid. The cytochrome P450 trt6 catalyzes three successive oxidations to transform terrenoid into an unstable intermediate, which then undergoes the D-ring expansion and unusual rearrangement of the methoxy group to afford the core skeleton of terretonin. Trt14 catalyzes the D-ring expansion of terretonin involving intramolecular methoxy rearrangement as well as the hydrolysis of the expanded D-ring and the methyl ester moiety. Finally, the nonheme iron-dependent dioxygenase trt7 accomplishes the last two oxidation reactions steps to complete the biosynthesis of terretonin. Terretonin C is produced via spontaneous decarboxylation of the terretonin precursor. Another shunt product of the terretonin biosynthesis is dihydrofarnesyl-DMOA, derived from epoxyfarnesyl-DMOA through hydrolysis of the epoxide. This chain is Polyprenyl transferase trt2, found in Aspergillus terreus (strain NIH 2624 / FGSC A1156).